A 107-amino-acid chain; its full sequence is Ferredoxin 1 (107 aa).

4Fe-4S ferredoxin-type domains are found at residues 2-30 (TFVV…YEGP) and 31-60 (NFLV…SEDE). Cys-9 and Cys-17 together coordinate [3Fe-4S] cluster. Residues Cys-21, Cys-40, Cys-43, and Cys-46 each coordinate [4Fe-4S] cluster. Cys-50 serves as a coordination point for [3Fe-4S] cluster.

Requires [4Fe-4S] cluster as cofactor. [3Fe-4S] cluster is required as a cofactor.

Functionally, ferredoxins are iron-sulfur proteins that transfer electrons in a wide variety of metabolic reactions. This is Ferredoxin 1 (fdxA) from Pseudomonas putida (strain ATCC 47054 / DSM 6125 / CFBP 8728 / NCIMB 11950 / KT2440).